The following is a 353-amino-acid chain: Variable large protein 17 (353 aa).

The first 18 residues, 1–18, serve as a signal peptide directing secretion; that stretch reads MRKRISAIIMTLFMVLVS. A lipid anchor (N-palmitoyl cysteine) is attached at C19. A lipid anchor (S-diacylglycerol cysteine) is attached at C19. Residues 332 to 353 form a disordered region; the sequence is EDKSVEATNTAEATTSGQQAKN. Over residues 337–353 the composition is skewed to polar residues; the sequence is EATNTAEATTSGQQAKN.

The protein belongs to the variable large protein (Vlp) family. Delta subfamily.

It localises to the cell outer membrane. Functionally, the Vlp and Vsp proteins are antigenically distinct proteins, only one vlp or vsp gene is transcriptionally active at any one time. Switching between these genes is a mechanism of host immune response evasion. This is Variable large protein 17 from Borrelia hermsii.